We begin with the raw amino-acid sequence, 195 residues long: Thioredoxin reductase-like selenoprotein T (195 aa).

The first 19 residues, 1–19, serve as a signal peptide directing secretion; sequence MRLLLLLLVAASAVVRSDA. The cysteinyl-selenocysteine (Cys-Sec) cross-link spans 46 to 49; that stretch reads CVSU. Residue Sec-49 is a non-standard amino acid, selenocysteine. A helical transmembrane segment spans residues 85 to 103; that stretch reads IASFLSVFKLVLIGLIIVG.

This sequence belongs to the SelWTH family. Selenoprotein T subfamily. May contain a selenide-sulfide bond between Cys-46 and Sec-49. This bond is speculated to serve as redox-active pair.

The protein localises to the endoplasmic reticulum membrane. It carries out the reaction [thioredoxin]-dithiol + NADP(+) = [thioredoxin]-disulfide + NADPH + H(+). Its function is as follows. Selenoprotein with thioredoxin reductase-like oxidoreductase activity. Protects dopaminergic neurons against oxidative stress and cell death. Involved in ADCYAP1/PACAP-induced calcium mobilization and neuroendocrine secretion. Plays a role in fibroblast anchorage and redox regulation. In gastric smooth muscle, modulates the contraction processes through the regulation of calcium release and MYLK activation. In pancreatic islets, involved in the control of glucose homeostasis, contributes to prolonged ADCYAP1/PACAP-induced insulin secretion. In Bos taurus (Bovine), this protein is Thioredoxin reductase-like selenoprotein T.